The chain runs to 32 residues: Ovostatin (32 aa).

The isoglutamyl cysteine thioester (Cys-Gln) cross-link spans 27-30 (CGEQ).

The protein belongs to the protease inhibitor I39 (alpha-2-macroglobulin) family. Homotetramer, which consists of two pairs of disulfide-linked chains.

It localises to the secreted. Its function is as follows. Is able to inhibit all four classes of proteinases by a unique 'trapping' mechanism. This protein has a peptide stretch, called the 'bait region' which contains specific cleavage sites for different proteinases. When a proteinase cleaves the bait region, a conformational change is induced in the protein which traps the proteinase. The entrapped enzyme remains active against low molecular weight substrates (activity against high molecular weight substrates is greatly reduced). Following cleavage in the bait region a thioester bond is hydrolyzed and mediates the covalent binding of the protein to the proteinase. This Anas platyrhynchos (Mallard) protein is Ovostatin.